We begin with the raw amino-acid sequence, 450 residues long: MVLAKTLHQEVYQTLSETFDFANNDQRLWWHSTAPMFQKILQTANYSIYAQYQHLSIYKSHIIPFLGVYPTRSGERWLSILTRYGTPFELSLNCSDSIVRYTYEPINAATGSHLDPFNTFAIWEALKKLIDSQPGIDLQWFSYFKQELTLDANESTYLHSQNLVKEQIKTQNKLALDLKGDKFVLKTYIYPELKSVATGKSVQELVFGSVRKLAQKHKSIRPAFEMLEDYVQSRNKVPTTDDSHNTPLSSRLLSCDLVSPTKSRVKIYLLERMVSLPAMEDLWTLGGRREDQSTIEGLEMIRELWGLLNMSPGLRAYPEPYLPLGAIPNEQLPSMANYTLHHNDPIPEPQVYFTVFGMNDMEVTNALTKFFMRHEWSDMASKYKACLRESFPHHNYEALNYIHSYISFSYRNNKPYLSVYLHSFETGEWPVFPEGLIAFDGCRRDLTCYK.

Residues 80 to 81 and Glu-89 contribute to the L-tryptophan site; that span reads IL. Substrate contacts are provided by Arg-100, Lys-186, and Tyr-188. L-tryptophan is bound by residues Tyr-190 and Arg-251. Substrate contacts are provided by Arg-264, Lys-266, Tyr-268, Gln-350, Tyr-352, Tyr-416, and Tyr-420.

Belongs to the tryptophan dimethylallyltransferase family. In terms of assembly, homodimer.

The enzyme catalyses L-tryptophan + dimethylallyl diphosphate = 4-(3-methylbut-2-enyl)-L-tryptophan + diphosphate. Its pathway is alkaloid biosynthesis; ergot alkaloid biosynthesis. In terms of biological role, catalyzes the first step of ergot alkaloid biosynthesis. Ergot alkaloids, which are produced by endophyte fungi, can enhance plant host fitness, but also cause livestock toxicosis to host plants. This is Tryptophan dimethylallyltransferase 2 (dmaW2) from Epichloe coenophiala (Tall fescue endophyte fungus).